The primary structure comprises 238 residues: Type III pantothenate kinase (238 aa).

6–13 (DSGNTRIK) contacts ATP. Residues Y90 and 97–100 (GVDR) each bind substrate. D99 functions as the Proton acceptor in the catalytic mechanism. An ATP-binding site is contributed by T122. Residue T172 coordinates substrate.

Belongs to the type III pantothenate kinase family. As to quaternary structure, homodimer. NH4(+) is required as a cofactor. It depends on K(+) as a cofactor.

The protein resides in the cytoplasm. The catalysed reaction is (R)-pantothenate + ATP = (R)-4'-phosphopantothenate + ADP + H(+). The protein operates within cofactor biosynthesis; coenzyme A biosynthesis; CoA from (R)-pantothenate: step 1/5. Functionally, catalyzes the phosphorylation of pantothenate (Pan), the first step in CoA biosynthesis. This chain is Type III pantothenate kinase, found in Dechloromonas aromatica (strain RCB).